The following is a 356-amino-acid chain: Mitogen-activated protein kinase PMK11 (356 aa).

The region spanning 24-312 (YDIQDVVGEG…VEEALKHPYL (289 aa)) is the Protein kinase domain. Residues 30-38 (VGEGAYGVV) and lysine 53 each bind ATP.

This sequence belongs to the protein kinase superfamily. CMGC Ser/Thr protein kinase family. MAP kinase subfamily. The cofactor is Mg(2+). Post-translationally, phosphorylated by MST7.

The enzyme catalyses L-seryl-[protein] + ATP = O-phospho-L-seryl-[protein] + ADP + H(+). It catalyses the reaction L-threonyl-[protein] + ATP = O-phospho-L-threonyl-[protein] + ADP + H(+). Functionally, mitogen-activated protein kinase; part of the MST11-MST7-PMK1 MAP kinase (MAPK) cascade that is essential for appressorium formation, penetration and invasive growth. Central regulator of appressorium development that acts downstream of the cAMP signal. The MST11-MST7-PMK1 MAP kinase cascade transduces signals from the cell surface sensors MDB2 and SHO1 that recognize various surface signals such as surface hydrophobicity, cutin monomers, and rice leaf waxes. Regulates expression of secreted fungal effector proteins implicated of host immune defenses, preventing reactive oxygen species generation and excessive callose deposition at plasmodesmata. Furthermore, controls the hyphal constriction required for fungal growth from one rice cell to the neighboring cell, enabling host tissue colonization and blast disease. Targets downstream of the PMK1-MAPK pathway include transcription factor MST12 and pathogenicity-related genes GAS1 and GAS2, both of which are expressed during appressorium formation, even if regulation of MST12 is not associated with expression of GAS1 or GAS2. The polypeptide is Mitogen-activated protein kinase PMK11 (Pyricularia oryzae (strain 70-15 / ATCC MYA-4617 / FGSC 8958) (Rice blast fungus)).